A 62-amino-acid chain; its full sequence is Large ribosomal subunit protein bL28 (62 aa).

The protein belongs to the bacterial ribosomal protein bL28 family.

In Streptococcus mutans serotype c (strain ATCC 700610 / UA159), this protein is Large ribosomal subunit protein bL28.